We begin with the raw amino-acid sequence, 642 residues long: Zinc finger protein 14 (642 aa).

The region spanning 4-76 (VSFEDVAVNF…MVERLCESRK (73 aa)) is the KRAB domain. The C2H2-type 1 zinc finger occupies 103 to 125 (HECSFCGRDFMHHSSLNRHMRSH). The C2H2-type 2; degenerate zinc finger occupies 141-163 (RKHKAVEKTFSYHHCFRKHERTH). Residues 169–191 (YECKQCGKAFIYYQPFQRHERTH) form a C2H2-type 3 zinc finger. A C2H2-type 4; atypical zinc finger spans residues 197–217 (YECKQCGKTFIYYQSFQQHAH). 15 consecutive C2H2-type zinc fingers follow at residues 223–245 (YECK…ERTH), 251–273 (YECK…ERTH), 279–301 (YKCK…KRTH), 307–329 (YECK…VITH), 335–357 (YKCK…ERTH), 363–385 (YECK…ERTH), 391–413 (YECK…ETTH), 419–441 (YECK…ERTH), 447–469 (YECK…ERSH), 475–497 (YECK…ERTH), 503–525 (YECK…EKIH), 531–553 (FECK…ERTH), 559–581 (YQCK…ERTH), 587–609 (YRCK…ERSH), and 615–637 (YECK…ERTH).

This sequence belongs to the krueppel C2H2-type zinc-finger protein family.

Its subcellular location is the nucleus. Functionally, may be involved in transcriptional regulation. The sequence is that of Zinc finger protein 14 (ZNF14) from Pongo abelii (Sumatran orangutan).